Reading from the N-terminus, the 430-residue chain is tRNA(Ile)-lysidine synthase (430 aa).

An ATP-binding site is contributed by 21–26 (SGGLDS).

This sequence belongs to the tRNA(Ile)-lysidine synthase family.

Its subcellular location is the cytoplasm. It carries out the reaction cytidine(34) in tRNA(Ile2) + L-lysine + ATP = lysidine(34) in tRNA(Ile2) + AMP + diphosphate + H(+). Its function is as follows. Ligates lysine onto the cytidine present at position 34 of the AUA codon-specific tRNA(Ile) that contains the anticodon CAU, in an ATP-dependent manner. Cytidine is converted to lysidine, thus changing the amino acid specificity of the tRNA from methionine to isoleucine. The protein is tRNA(Ile)-lysidine synthase of Salmonella newport (strain SL254).